The following is a 224-amino-acid chain: 7-cyano-7-deazaguanine synthase (224 aa).

Residue 9–19 (ISGGMDSTLCA) coordinates ATP. Residues Cys-190, Cys-198, Cys-201, and Cys-204 each contribute to the Zn(2+) site.

It belongs to the QueC family. Zn(2+) is required as a cofactor.

It catalyses the reaction 7-carboxy-7-deazaguanine + NH4(+) + ATP = 7-cyano-7-deazaguanine + ADP + phosphate + H2O + H(+). Its pathway is purine metabolism; 7-cyano-7-deazaguanine biosynthesis. Functionally, catalyzes the ATP-dependent conversion of 7-carboxy-7-deazaguanine (CDG) to 7-cyano-7-deazaguanine (preQ(0)). This Campylobacter jejuni subsp. doylei (strain ATCC BAA-1458 / RM4099 / 269.97) protein is 7-cyano-7-deazaguanine synthase.